The primary structure comprises 122 residues: MIQSFTRLAVADNSGAKELMCIKILGGSKRRYATVGDIIVCSVKKALPNGKIKRGQVVKAVVVRTKKELHRGNGSLIRFDENAAVVLDSKKELIGTRIFGPVGREVRYNGFMKIVSLAPEVL.

Belongs to the universal ribosomal protein uL14 family. In terms of assembly, part of the 50S ribosomal subunit. Forms a cluster with proteins L3 and L19. In the 70S ribosome, L14 and L19 interact and together make contacts with the 16S rRNA in bridges B5 and B8.

Functionally, binds to 23S rRNA. Forms part of two intersubunit bridges in the 70S ribosome. In Campylobacter hominis (strain ATCC BAA-381 / DSM 21671 / CCUG 45161 / LMG 19568 / NCTC 13146 / CH001A), this protein is Large ribosomal subunit protein uL14.